Reading from the N-terminus, the 228-residue chain is Homeobox-leucine zipper protein ATHB-53 (228 aa).

The disordered stretch occupies residues 36 to 62; the sequence is DGGEESKPVKRRRKRRSKGSSATNEED. The segment covering 44–53 has biased composition (basic residues); that stretch reads VKRRRKRRSK. Residues 68-127 constitute a DNA-binding region (homeobox); sequence GMLRKRKLTDEQVNMLEYSFGNEHKLESGRKEKIAGELGLDPRQVAVWFQNRRARWKNKK. Residues 128–156 are leucine-zipper; it reads LEEEYAKLKNHHDNVVLGQCQLESQILKL.

The protein belongs to the HD-ZIP homeobox family. Class I subfamily. In terms of tissue distribution, expressed in root meristem, late flowers and siliques.

The protein localises to the nucleus. In terms of biological role, probable transcription factor that may play a regulatory role in auxin/cytokinin signaling during root development. The sequence is that of Homeobox-leucine zipper protein ATHB-53 (ATHB-53) from Arabidopsis thaliana (Mouse-ear cress).